The chain runs to 268 residues: MSGKANASKKNAQQLKRNPKRKKDNEEVVLSENKVRNTVKKNKNHLKDLSSEGQTKHTNLKHGKTAASKRKTWQPLSKSTRDHLQTMMESVIMTILSNSIKEKEEIQYHLNFLKKRLLQQCETLKVPPKKMEDLTNVSSLLNMERARDKANEEGLALLQEEIDKMVETTELMTGNIQSLKNKIQILASEVEEEEERVKQMHQINSSGVLSLPELSQKTLKAPTLQKEILALIPNQNALLKDLDILHNSSQMKSMSTFIEEAYKKLDAS.

The interval Met1–Thr80 is disordered. Ser31 and Ser50 each carry phosphoserine. Residues Thr58–Thr72 are compositionally biased toward basic residues. Residues Glu170–Ser206 adopt a coiled-coil conformation. Ser249 is modified (phosphoserine).

This sequence belongs to the CENP-Q/OKP1 family. Component of the CENPA-CAD complex, composed of CENPI, CENPK, CENPL, CENPO, CENPP, CENPQ, CENPR and CENPS. The CENPA-CAD complex interacts with the CENPA-NAC complex, at least composed of CENPA, CENPC, CENPH, CENPM, CENPN, CENPT and CENPU. In terms of processing, phosphorylation at Ser-50 is essential for CENPE recruitment to kinetochores and orderly chromosome congression.

It localises to the nucleus. It is found in the chromosome. Its subcellular location is the centromere. In terms of biological role, component of the CENPA-CAD (nucleosome distal) complex, a complex recruited to centromeres which is involved in assembly of kinetochore proteins, mitotic progression and chromosome segregation. May be involved in incorporation of newly synthesized CENPA into centromeres via its interaction with the CENPA-NAC complex. Plays an important role in chromosome congression and in the recruitment of CENP-O complex (which comprises CENPO, CENPP, CENPQ and CENPU), CENPE and PLK1 to the kinetochores. The protein is Centromere protein Q (CENPQ) of Homo sapiens (Human).